The chain runs to 270 residues: Metallo-beta-lactamase type 2 (270 aa).

Positions 1 to 28 (MELPNIMHPVAKLSTALAAALMLSGCMP) are cleaved as a signal peptide. His120, His122, Asp124, His189, and Cys208 together coordinate Zn(2+). Substrate contacts are provided by Lys211 and Asn220. His250 contributes to the Zn(2+) binding site.

This sequence belongs to the metallo-beta-lactamase superfamily. Class-B beta-lactamase family. Monomer. Zn(2+) serves as cofactor.

It is found in the periplasm. It catalyses the reaction a beta-lactam + H2O = a substituted beta-amino acid. Inhibits by captopril, thiorphan, dimercaprol and tiopronin. This enzyme is not susceptible to inactivation by the beta-lactamase-blocking agents clavulanic acid. Its function is as follows. Confers resistance to the different beta-lactams antibiotics (penicillin, cephalosporin and carbapenem) via the hydrolysis of the beta-lactam ring. Does not confer resistance to the polymixin colistin or the fluoroquinolone ciprofloxacin. The protein is Metallo-beta-lactamase type 2 of Klebsiella pneumoniae.